Consider the following 318-residue polypeptide: Glutathione synthetase (318 aa).

The region spanning 124 to 310 (EKLFTAWFPE…ITGKLMDAIE (187 aa)) is the ATP-grasp domain. 150 to 207 (FREQHGDVILKPLDGMGGASIFRVKEGDPNLSVIIETLTNHGQNYCMAQTFVPDISNG) contributes to the ATP binding site. Positions 281 and 283 each coordinate Mg(2+).

It belongs to the prokaryotic GSH synthase family. It depends on Mg(2+) as a cofactor. Mn(2+) is required as a cofactor.

It carries out the reaction gamma-L-glutamyl-L-cysteine + glycine + ATP = glutathione + ADP + phosphate + H(+). The protein operates within sulfur metabolism; glutathione biosynthesis; glutathione from L-cysteine and L-glutamate: step 2/2. This is Glutathione synthetase from Vibrio cholerae serotype O1 (strain ATCC 39315 / El Tor Inaba N16961).